The chain runs to 123 residues: Protein TraJ (123 aa).

In terms of assembly, monomer.

The protein resides in the cytoplasm. In terms of biological role, transfer of plasmid RP4 during bacterial conjugation requires the plasmid-encoded TraJ protein, which binds to a 19-base pair invert sequence repetition within the transfer origin. TraJ protein is bound to only one side of the DNA helix. This nucleoprotein structure is the initial complex in the pathway to assemble a functional relaxosome. This Escherichia coli protein is Protein TraJ (traJ).